The following is a 684-amino-acid chain: Threonine--tRNA ligase (684 aa).

In terms of domain architecture, TGS spans 1-64 (MTAPNPSSLV…ESDTEVEPVA (64 aa)). The catalytic stretch occupies residues 261 to 567 (DHRKLGVELD…LTEHYAGAFP (307 aa)). Positions 366, 417, and 544 each coordinate Zn(2+).

The protein belongs to the class-II aminoacyl-tRNA synthetase family. Homodimer. The cofactor is Zn(2+).

It is found in the cytoplasm. It catalyses the reaction tRNA(Thr) + L-threonine + ATP = L-threonyl-tRNA(Thr) + AMP + diphosphate + H(+). Catalyzes the attachment of threonine to tRNA(Thr) in a two-step reaction: L-threonine is first activated by ATP to form Thr-AMP and then transferred to the acceptor end of tRNA(Thr). Also edits incorrectly charged L-seryl-tRNA(Thr). The chain is Threonine--tRNA ligase from Mycobacteroides abscessus (strain ATCC 19977 / DSM 44196 / CCUG 20993 / CIP 104536 / JCM 13569 / NCTC 13031 / TMC 1543 / L948) (Mycobacterium abscessus).